The sequence spans 354 residues: N-acylethanolamine-hydrolyzing acid amidase (354 aa).

The N-terminal stretch at 1 to 22 (MRSPGIVLLLLLLLLLPPGAAP) is a signal peptide. Asparagine 35 and asparagine 104 each carry an N-linked (GlcNAc...) asparagine glycan. Catalysis depends on cysteine 123, which acts as the Nucleophile. N-linked (GlcNAc...) asparagine glycosylation is found at asparagine 306, asparagine 312, and asparagine 352.

This sequence belongs to the acid ceramidase family. In terms of assembly, heterodimer of an alpha and a beta subunit, produced by autocatalytic cleavage. In terms of processing, N-glycosylated. Tunicamycin treatment causes a reduction in specific activity against N-palmitoylethanolamine. Autoproteolytic cleavage at pH 4.5 gives rise to the alpha and beta subunit. Cleavage gives rise to a conformation change that activates the enzyme. The same catalytic Cys residue mediates the autoproteolytic cleavage and subsequent hydrolysis of lipid substrates.

It is found in the lysosome. The protein localises to the membrane. The enzyme catalyses N-hexadecanoylethanolamine + H2O = ethanolamine + hexadecanoate. The catalysed reaction is an N-(long-chain fatty acyl)ethanolamine + H2O = a long-chain fatty acid + ethanolamine. It catalyses the reaction N-dodecanoylethanolamine + H2O = dodecanoate + ethanolamine. It carries out the reaction N-tetradecanoylethanolamine + H2O = tetradecanoate + ethanolamine. The enzyme catalyses an N-acylsphing-4-enine + H2O = sphing-4-enine + a fatty acid. The catalysed reaction is N-hexadecanoylsphing-4-enine + H2O = sphing-4-enine + hexadecanoate. It catalyses the reaction N-dodecanoylsphing-4-enine + H2O = dodecanoate + sphing-4-enine. It functions in the pathway lipid metabolism; fatty acid metabolism. In terms of biological role, degrades bioactive fatty acid amides to their corresponding acids, with the following preference: N-palmitoylethanolamine &gt; N-myristoylethanolamine &gt; N-stearoylethanolamine &gt; N-oleoylethanolamine &gt; N-linoleoylethanolamine &gt; N-arachidonoylethanolamine. This chain is N-acylethanolamine-hydrolyzing acid amidase, found in Cavia porcellus (Guinea pig).